The primary structure comprises 101 residues: NAD(P)H-quinone oxidoreductase subunit 4L, chloroplastic (101 aa).

A run of 3 helical transmembrane segments spans residues 2 to 22 (MLEH…YGLI), 32 to 52 (MCLE…SDLF), and 61 to 81 (IFSI…PAIV).

It belongs to the complex I subunit 4L family. In terms of assembly, NDH is composed of at least 16 different subunits, 5 of which are encoded in the nucleus.

The protein resides in the plastid. Its subcellular location is the chloroplast thylakoid membrane. It catalyses the reaction a plastoquinone + NADH + (n+1) H(+)(in) = a plastoquinol + NAD(+) + n H(+)(out). It carries out the reaction a plastoquinone + NADPH + (n+1) H(+)(in) = a plastoquinol + NADP(+) + n H(+)(out). Its function is as follows. NDH shuttles electrons from NAD(P)H:plastoquinone, via FMN and iron-sulfur (Fe-S) centers, to quinones in the photosynthetic chain and possibly in a chloroplast respiratory chain. The immediate electron acceptor for the enzyme in this species is believed to be plastoquinone. Couples the redox reaction to proton translocation, and thus conserves the redox energy in a proton gradient. This chain is NAD(P)H-quinone oxidoreductase subunit 4L, chloroplastic, found in Nymphaea alba (White water-lily).